Consider the following 440-residue polypeptide: Tetratricopeptide repeat protein 5 (440 aa).

TPR repeat units follow at residues 7–61 (EEVK…EEVV), 68–98 (AQVL…AVKL), 103–130 (VEAW…SGAL), 136–174 (KVSL…AVQM), and 179–216 (GRSW…AEKV). The short motif at 13–24 (LQKLQELVDQLY) is the Nuclear export signal element. Residue serine 203 is modified to Phosphoserine; by ATM. Phosphoserine; by CHEK2 is present on serine 221. One copy of the TPR 6 repeat lies at 224–253 (PDLHLNRATLHKYEENYGEALEGFSRAAAL). A mediates interaction with 28S rRNA of ribosome-coding tubulin region spans residues 285–287 (KTK).

As to quaternary structure, interacts with JMY and p300/EP300; the interaction occurs in the nucleus and augments the association between JMY and p300/EP300 in response to DNA damage. Interacts with PRMT5; the interaction is DNA damage-dependent and promotes PRMT5 interaction with p53/TP53 and subsequent methylation. Forms a complex with HSF1 and p300/EP300; these interactions augment chromatin-bound HSF1 and p300/EP300 histone acetyltransferase activity, resulting in enhanced heat-shock-responsive transcription. Interacts with JMY; the interaction occurs in the cytoplasm and results in the inhibition of JYM's nucleation activity. Interacts with ribosome-coding tubulin (via 60S subunit 28S rRNA and protein uL24/RPL26) and the N-terminal of nascent tubulin polypeptide (via alpha-tubulin MREC motif and beta-tubulin MREI motif); these interactions result in tubulin mRNA-targeted degradation. Interacts with ATP5F1B; the interaction occurs in the mitochondria and results in ATP production decrease. Interacts with p53/TP53; the interaction occurs in the mitochondria and results in increased apoptosis. In terms of processing, phosphorylation by ATM kinase induces nuclear accumulation while interfering with nuclear export, and phosphorylation by CHEK2 kinase enhances nuclear stability.

The protein resides in the nucleus. The protein localises to the cytoplasm. Its subcellular location is the cytoplasmic vesicle. It localises to the mitochondrion matrix. Its function is as follows. Cofactor involved in the regulation of various cellular mechanisms such as actin regulation, autophagy, chromatin regulation and DNA repair. In physiological conditions, interacts with cofactor JMY in the cytoplasm which prevents JMY's actin nucleation activity and ability to activate the Arp2/3 complex. Acts as a negative regulator of nutrient stress-induced autophagy by inhibiting JMY's interaction with MAP1LC3B, thereby preventing autophagosome formation. Involves in tubulin autoregulation by promoting its degradation in response to excess soluble tubulin. To do so, associates with the active ribosome near the ribosome exit tunnel and with nascent tubulin polypeptides early during their translation, triggering tubulin mRNA-targeted degradation. Following DNA damage, phosphorylated by DNA damage responsive protein kinases ATM and CHEK2, leading to its nuclear accumulation and stability. Nuclear TTC5/STRAP promotes the assembly of a stress-responsive p53/TP53 coactivator complex, which includes the coactivators JMY and p300, thereby increasing p53/TP53-dependent transcription and apoptosis. Also recruits arginine methyltransferase PRMT5 to p53/TP53 when DNA is damaged, allowing PRMT5 to methylate p53/TP53. In DNA stress conditions, also prevents p53/TP53 degradation by E3 ubiquitin ligase MDM2. Upon heat-shock stress, forms a chromatin-associated complex with heat-shock factor 1 HSF1 and p300/EP300 to stimulate heat-shock-responsive transcription, thereby increasing cell survival. Mitochondrial TTC5/STRAP interacts with ATP synthase subunit beta ATP5F1B which decreased ATP synthase activity and lowers mitochondrial ATP production, thereby regulating cellular respiration and mitochondrial-dependent apoptosis. Mitochondrial TTC5/STRAP also regulates p53/TP53-mediated apoptosis. The protein is Tetratricopeptide repeat protein 5 (TTC5) of Bos taurus (Bovine).